The sequence spans 374 residues: MEMO1 family protein aq_1336 (374 aa).

The protein belongs to the MEMO1 family.

In Aquifex aeolicus (strain VF5), this protein is MEMO1 family protein aq_1336.